The following is a 595-amino-acid chain: MAGERWQAEGPGEGWAIYVTPRAPIREGRRRLDPRNGDSSDAPAYGAHPSRRGRREVRFSEEPAEVYGDFEPRAAKERSPGGRRTPPEKFRPASAGEEVRESAYNLRSRPRRQRRAQEAEEMKTRRSARLEQHSQQPQLSPATSGRGLRDSPSSSEDREEDEPSSRPVTSQTASKKTLRTPEASVMNEDPISNLCRPPLRSPRLDSTYQTNGNTKTNEREATIVQQVNFFEEGETEDDLESSYSDITIRARSSDSLESRDEATPAAGNHPDSLRGLPHNQDFPAHENQPLLLTSGCQENPQEWVDRAVRMRSRMAYNNIQKSNFGNQSPSTSRPQSAIHHPNEPSVKIKWWLLGLVAILAVGLFWFFHTPAVETTAVQEFQNQMKQLQSKYQSQNEKLWKRGTTFLEKHLNSSLPRPQPAILLLTAAQDAAEVLKCLSEQIADAYSSFRSVRAIRIDGAGKAAQDSDLVKHEVDQELTDGFKNGQNAAVVHRFESLPAGSTLIFYKYCDHENAAFKDVALVLTVLLEEKTLEASLGLKEIEEKVRDFLKVKFTSSSTASSYNHMDPDKLNGLWSRISHLVLPVQPENTLKAGSCL.

Residues 1-221 form a disordered region; sequence MAGERWQAEG…GNTKTNEREA (221 aa). At 1–351 the chain is on the nuclear side; it reads MAGERWQAEG…NEPSVKIKWW (351 aa). The segment covering 24–38 has biased composition (basic and acidic residues); it reads PIREGRRRLDPRNGD. At Ser-60 the chain carries Phosphoserine. 2 stretches are compositionally biased toward basic and acidic residues: residues 70–101 and 115–132; these read FEPRAAKERSPGGRRTPPEKFRPASAGEEVRE and RAQEAEEMKTRRSARLEQ. Positions 133-143 are enriched in polar residues; that stretch reads HSQQPQLSPAT. Phosphoserine occurs at positions 134, 140, 151, 153, 154, and 155. The span at 204–215 shows a compositional bias: polar residues; it reads LDSTYQTNGNTK. A Phosphothreonine modification is found at Thr-235. Phosphoserine is present on residues Ser-241, Ser-244, and Ser-255. Disordered regions lie at residues 250–286 and 319–340; these read ARSSDSLESRDEATPAAGNHPDSLRGLPHNQDFPAHE and IQKSNFGNQSPSTSRPQSAIHH. A compositionally biased stretch (basic and acidic residues) spans 251–262; that stretch reads RSSDSLESRDEA. Residues 319–335 show a composition bias toward polar residues; it reads IQKSNFGNQSPSTSRPQ. A Glycyl lysine isopeptide (Lys-Gly) (interchain with G-Cter in SUMO2) cross-link involves residue Lys-321. Ser-328 is subject to Phosphoserine. A helical transmembrane segment spans residues 352-372; that stretch reads LLGLVAILAVGLFWFFHTPAV. Residues 368–595 are interaction with TOR1A; sequence HTPAVETTAV…ENTLKAGSCL (228 aa). Residues 373–400 adopt a coiled-coil conformation; the sequence is ETTAVQEFQNQMKQLQSKYQSQNEKLWK. Over 373 to 595 the chain is Perinuclear space; it reads ETTAVQEFQN…ENTLKAGSCL (223 aa). Asn-411 is a glycosylation site (N-linked (GlcNAc...) asparagine).

It belongs to the TOR1AIP family. Interacts with ATP1B4. Interacts with TOR1A (ATP-bound). Interacts with TOR1B, TOR2A and TOR3A. Interacts with VIM. In terms of tissue distribution, expressed in the spinal cord and liver (at protein level).

It is found in the nucleus inner membrane. Functionally, required for nuclear membrane integrity. Induces TOR1A and TOR1B ATPase activity and is required for their location on the nuclear membrane. Binds to A- and B-type lamins. Possible role in membrane attachment and assembly of the nuclear lamina. The protein is Torsin-1A-interacting protein 1 (Tor1aip1) of Mus musculus (Mouse).